The primary structure comprises 106 residues: MYAIVRSGGRQHKVAVGDIVEVDKISTAKVGDTVELSTLLVVDGDAVTSDPWVLDGIKVTAEIVDHHKGAKIDILRYKNKTGYRRRQGHRQQYTAIKVTGIPAAAK.

The protein belongs to the bacterial ribosomal protein bL21 family. In terms of assembly, part of the 50S ribosomal subunit. Contacts protein L20.

This protein binds to 23S rRNA in the presence of protein L20. This chain is Large ribosomal subunit protein bL21, found in Streptomyces griseus subsp. griseus (strain JCM 4626 / CBS 651.72 / NBRC 13350 / KCC S-0626 / ISP 5235).